The chain runs to 367 residues: Glutamate 5-kinase (367 aa).

Residue Lys10 coordinates ATP. Substrate-binding residues include Ser50, Asp137, and Asn149. ATP-binding positions include 169 to 170 and 211 to 217; these read TD and TGGMSTK. The PUA domain occupies 275 to 353; it reads AGEITVDEGA…QQIDAILGYE (79 aa).

Belongs to the glutamate 5-kinase family.

It is found in the cytoplasm. The catalysed reaction is L-glutamate + ATP = L-glutamyl 5-phosphate + ADP. Its pathway is amino-acid biosynthesis; L-proline biosynthesis; L-glutamate 5-semialdehyde from L-glutamate: step 1/2. Catalyzes the transfer of a phosphate group to glutamate to form L-glutamate 5-phosphate. The chain is Glutamate 5-kinase from Salmonella agona (strain SL483).